The following is a 431-amino-acid chain: Histidinol dehydrogenase (431 aa).

NAD(+) contacts are provided by Tyr-127, Gln-189, and Asn-212. Ser-237, Gln-259, and His-262 together coordinate substrate. The Zn(2+) site is built by Gln-259 and His-262. Catalysis depends on proton acceptor residues Glu-326 and His-327. Substrate is bound by residues His-327, Asp-360, Glu-414, and His-419. Zn(2+) is bound at residue Asp-360. His-419 provides a ligand contact to Zn(2+).

It belongs to the histidinol dehydrogenase family. Requires Zn(2+) as cofactor.

The catalysed reaction is L-histidinol + 2 NAD(+) + H2O = L-histidine + 2 NADH + 3 H(+). It participates in amino-acid biosynthesis; L-histidine biosynthesis; L-histidine from 5-phospho-alpha-D-ribose 1-diphosphate: step 9/9. Its function is as follows. Catalyzes the sequential NAD-dependent oxidations of L-histidinol to L-histidinaldehyde and then to L-histidine. The polypeptide is Histidinol dehydrogenase (Xanthomonas axonopodis pv. citri (strain 306)).